The chain runs to 251 residues: Ribosomal RNA small subunit methyltransferase J (251 aa).

S-adenosyl-L-methionine-binding positions include 100–101 (RD), 116–117 (ER), and Asp170.

Belongs to the methyltransferase superfamily. RsmJ family.

Its subcellular location is the cytoplasm. It carries out the reaction guanosine(1516) in 16S rRNA + S-adenosyl-L-methionine = N(2)-methylguanosine(1516) in 16S rRNA + S-adenosyl-L-homocysteine + H(+). Its function is as follows. Specifically methylates the guanosine in position 1516 of 16S rRNA. The chain is Ribosomal RNA small subunit methyltransferase J from Actinobacillus pleuropneumoniae serotype 3 (strain JL03).